We begin with the raw amino-acid sequence, 277 residues long: 4-hydroxy-tetrahydrodipicolinate reductase (277 aa).

Residues 11–16 (GALGRM) and 110–112 (GTT) each bind NAD(+). H166 functions as the Proton donor/acceptor in the catalytic mechanism. H167 serves as a coordination point for (S)-2,3,4,5-tetrahydrodipicolinate. The active-site Proton donor is the K170. 176-177 (GT) serves as a coordination point for (S)-2,3,4,5-tetrahydrodipicolinate.

It belongs to the DapB family.

It localises to the cytoplasm. The enzyme catalyses (S)-2,3,4,5-tetrahydrodipicolinate + NAD(+) + H2O = (2S,4S)-4-hydroxy-2,3,4,5-tetrahydrodipicolinate + NADH + H(+). It catalyses the reaction (S)-2,3,4,5-tetrahydrodipicolinate + NADP(+) + H2O = (2S,4S)-4-hydroxy-2,3,4,5-tetrahydrodipicolinate + NADPH + H(+). It functions in the pathway amino-acid biosynthesis; L-lysine biosynthesis via DAP pathway; (S)-tetrahydrodipicolinate from L-aspartate: step 4/4. In terms of biological role, catalyzes the conversion of 4-hydroxy-tetrahydrodipicolinate (HTPA) to tetrahydrodipicolinate. This Synechococcus sp. (strain CC9605) protein is 4-hydroxy-tetrahydrodipicolinate reductase.